Here is a 241-residue protein sequence, read N- to C-terminus: MNTTILIHDDDIQVNDLKENKTFLLLSEHNERIIDKLCSCLLPIIFYCDYITSPDDEGTLETRILSSSYMIRDKYVNVEEFITAGLPLSWCVNLPEKAHSTASDSLIIRDVLYYKKDWIRILLIQCPSAIYTDEELLIDPFKLPRHPPELFKNVTLRSYVNGLLFYPTSSPLYALLSHVVTTFIIKHITCVTKHDEKLITTCYDKGRFNAFVYAWYNSQISDDVVENEKVKNLFALVKARI.

This sequence belongs to the chordopoxvirinae D3 family.

The protein localises to the virion. Its function is as follows. Late protein which is part of a large complex required for early virion morphogenesis. This complex participates in the formation of virosomes and the incorporation of virosomal contents into nascent immature virions. This Oryctolagus cuniculus (Rabbit) protein is Core protein D3 homolog.